A 123-amino-acid chain; its full sequence is S-adenosylmethionine decarboxylase proenzyme 2 (123 aa).

Ser65 (schiff-base intermediate with substrate; via pyruvic acid) is an active-site residue. Ser65 bears the Pyruvic acid (Ser); by autocatalysis mark. The active-site Proton acceptor; for processing activity is the His70. Catalysis depends on Cys85, which acts as the Proton donor; for catalytic activity.

It belongs to the prokaryotic AdoMetDC family. Type 1 subfamily. As to quaternary structure, heterotetramer of two alpha and two beta chains arranged as a dimer of alpha/beta heterodimers. The cofactor is pyruvate. Post-translationally, is synthesized initially as an inactive proenzyme. Formation of the active enzyme involves a self-maturation process in which the active site pyruvoyl group is generated from an internal serine residue via an autocatalytic post-translational modification. Two non-identical subunits are generated from the proenzyme in this reaction, and the pyruvate is formed at the N-terminus of the alpha chain, which is derived from the carboxyl end of the proenzyme. The post-translation cleavage follows an unusual pathway, termed non-hydrolytic serinolysis, in which the side chain hydroxyl group of the serine supplies its oxygen atom to form the C-terminus of the beta chain, while the remainder of the serine residue undergoes an oxidative deamination to produce ammonia and the pyruvoyl group blocking the N-terminus of the alpha chain.

It catalyses the reaction S-adenosyl-L-methionine + H(+) = S-adenosyl 3-(methylsulfanyl)propylamine + CO2. Its pathway is amine and polyamine biosynthesis; S-adenosylmethioninamine biosynthesis; S-adenosylmethioninamine from S-adenosyl-L-methionine: step 1/1. Catalyzes the decarboxylation of S-adenosylmethionine to S-adenosylmethioninamine (dcAdoMet), the propylamine donor required for the synthesis of the polyamines spermine and spermidine from the diamine putrescine. The polypeptide is S-adenosylmethionine decarboxylase proenzyme 2 (Bacillus cereus (strain ZK / E33L)).